The chain runs to 578 residues: Threonylcarbamoyladenosine tRNA methylthiotransferase (578 aa).

Residues 63 to 171 (QKIWIRTWGC…VVEVVEETIK (109 aa)) form the MTTase N-terminal domain. Positions 72 and 108 each coordinate [4Fe-4S] cluster. At serine 121 the chain carries Phosphoserine. [4Fe-4S] cluster is bound by residues cysteine 137, cysteine 213, cysteine 217, and cysteine 220. A Radical SAM core domain is found at 199–430 (RKNPLIEIIS…RVFHSYNPYD (232 aa)). The TRAM domain maps to 430–492 (DHKIGERQQV…KHFLKGQPVS (63 aa)). The residue at position 498 (threonine 498) is a Phosphothreonine. A helical membrane pass occupies residues 553-570 (CALKVATGLALLALLLHF).

Belongs to the methylthiotransferase family. CDKAL1 subfamily. [4Fe-4S] cluster is required as a cofactor. In terms of tissue distribution, expressed in pancreas, liver and skeletal muscle, especially in white muscle fibers.

The protein localises to the endoplasmic reticulum membrane. It catalyses the reaction N(6)-L-threonylcarbamoyladenosine(37) in tRNA + (sulfur carrier)-SH + AH2 + 2 S-adenosyl-L-methionine = 2-methylsulfanyl-N(6)-L-threonylcarbamoyladenosine(37) in tRNA + (sulfur carrier)-H + 5'-deoxyadenosine + L-methionine + A + S-adenosyl-L-homocysteine + 2 H(+). In terms of biological role, catalyzes the methylthiolation of N6-threonylcarbamoyladenosine (t(6)A), leading to the formation of 2-methylthio-N6-threonylcarbamoyladenosine (ms(2)t(6)A) at position 37 in tRNAs that read codons beginning with adenine. The sequence is that of Threonylcarbamoyladenosine tRNA methylthiotransferase (Cdkal1) from Mus musculus (Mouse).